A 482-amino-acid chain; its full sequence is Glycogen synthase (482 aa).

K18 contacts ADP-alpha-D-glucose.

The protein belongs to the glycosyltransferase 1 family. Bacterial/plant glycogen synthase subfamily.

The enzyme catalyses [(1-&gt;4)-alpha-D-glucosyl](n) + ADP-alpha-D-glucose = [(1-&gt;4)-alpha-D-glucosyl](n+1) + ADP + H(+). The protein operates within glycan biosynthesis; glycogen biosynthesis. Functionally, synthesizes alpha-1,4-glucan chains using ADP-glucose. This chain is Glycogen synthase, found in Rhodopseudomonas palustris (strain HaA2).